The primary structure comprises 72 residues: Small proline-rich protein 2A (72 aa).

A compositionally biased stretch (low complexity) spans 1–11 (MSYQQQQCKQP). Positions 1–20 (MSYQQQQCKQPCQPPPVCPT) are disordered. 3 consecutive repeat copies span residues 21-29 (PKCPEPCPP), 30-38 (PKCPEPCPP), and 39-47 (PKCPQPCPP). A 3 X 9 AA tandem repeats of P-K-C-P-[EQ]-P-C-P-P region spans residues 21–47 (PKCPEPCPPPKCPEPCPPPKCPQPCPP). The segment at 42-72 (PQPCPPQQCQQKYPPVTPSPPCQSKYPPKSK) is disordered.

The protein belongs to the cornifin (SPRR) family. Forms five pairs of intrachain disulfide bonds. Expressed in intestine; selectively expressed in goblet cells.

Its subcellular location is the secreted. The protein localises to the extracellular space. It localises to the cytoplasmic vesicle. The protein resides in the secretory vesicle. In terms of biological role, gut bactericidal protein that selectively kills Gram-positive bacteria by binding to negatively charged lipids on bacterial membranes, leading to bacterial membrane permeabilization and disruption. Specifically binds lipids bearing negatively charged headgroups, such as phosphatidic acid, phosphatidylserine (PS), cardiolipin (CL), and phosphatidylinositol phosphates, but not to zwitterionic or neutral lipids. Induced by type-2 cytokines in response to helminth infection and is required to protect against helminth-induced bacterial invasion of intestinal tissue. May also be involved in the development of the cornified envelope of squamous epithelia; however, additional evidences are required to confirm this result in vivo. The chain is Small proline-rich protein 2A from Homo sapiens (Human).